A 607-amino-acid chain; its full sequence is METLQGRKPKKPHYIPRPPGKPFKYQCFQCPFTCNIKSHLFNHMKYNLCKNSISLVSQRMEQTGKASRASQHSPAFSHNSKELPLDAESTKPIENVKIEKAVTKEAREKPQSPIKEVSKDDTEPALEAKDKSEDMDIAQNKISSAFSPVARTCESEALSLSPHKDDQSTIPHFYQQIAPWVTSASSAHLLPPIPEYPPYMVPERSLPPLYAPYPHNQASTPAYQVTPRETQRPLVPSPLIPPNSSLLHPYHYRYGHSIFPSPPLPYSFYQHPELSIPLQRSRYLPLDVYSSRFYPREYGGHLVPLTHPESYSRLAEDRAVQEHNTGDKGIRESPLEGCDASGSPDRPSTADVTQRIPVGLRLASHGESHSGSQSHIISGSTKANDNLPKMPCGQNQEKMLQKTERYDSQTTISSRSSDISDKEEDEETEEEIGPLNLSKRDQATSNNMTHHHYPDRELHYDSESSQEEAPLNLCLRVQSSNQALPNTSETPEKETISNAEVSTTESPQDLEPCDQRQTAAFALCQLASSRDIINDTSVKQQDVTESQNTKCLPSPDNCSVKDSPNILNASMVALGQKRANNRPLRHTNKRAKVKEPSRPRRKRSQNC.

The CCHC-type zinc-finger motif lies at 25–51 (YQCFQCPFTCNIKSHLFNHMKYNLCKN). Zn(2+)-binding residues include C27, C30, H43, and C49. The segment covering 60 to 78 (MEQTGKASRASQHSPAFSH) has biased composition (polar residues). Disordered stretches follow at residues 60–133 (MEQT…DKSE), 318–467 (RAVQ…SSQE), 482–511 (QALP…QDLE), and 575–607 (GQKR…SQNC). Basic and acidic residues-rich tracts occupy residues 79–133 (NSKE…DKSE) and 318–334 (RAVQ…RESP). The span at 369–380 (HSGSQSHIISGS) shows a compositional bias: low complexity. Residues 421-432 (DKEEDEETEEEI) show a composition bias toward acidic residues. Positions 452 to 462 (HYPDRELHYDS) are enriched in basic and acidic residues. Residues 496 to 507 (ISNAEVSTTESP) show a composition bias toward polar residues. The span at 579 to 592 (ANNRPLRHTNKRAK) shows a compositional bias: basic residues.

It is found in the nucleus. Functionally, transcription factor involved in epidermis differentiation. The sequence is that of Zinc finger protein 750 (znf750) from Danio rerio (Zebrafish).